The chain runs to 169 residues: S-ribosylhomocysteine lyase (169 aa).

3 residues coordinate Fe cation: histidine 54, histidine 58, and cysteine 128.

The protein belongs to the LuxS family. As to quaternary structure, homodimer. Fe cation serves as cofactor.

The enzyme catalyses S-(5-deoxy-D-ribos-5-yl)-L-homocysteine = (S)-4,5-dihydroxypentane-2,3-dione + L-homocysteine. Functionally, involved in the synthesis of autoinducer 2 (AI-2) which is secreted by bacteria and is used to communicate both the cell density and the metabolic potential of the environment. The regulation of gene expression in response to changes in cell density is called quorum sensing. Catalyzes the transformation of S-ribosylhomocysteine (RHC) to homocysteine (HC) and 4,5-dihydroxy-2,3-pentadione (DPD). This is S-ribosylhomocysteine lyase from Shewanella sp. (strain ANA-3).